The following is a 713-amino-acid chain: Mitochondrial intermediate peptidase (713 aa).

Residues 1–35 (MLCVGRLGGLGARAAALPPRRAGRGILEAGIRARR) constitute a mitochondrion transit peptide. N6-acetyllysine is present on K126. Residue H495 participates in Zn(2+) binding. E496 is an active-site residue. Positions 499 and 502 each coordinate Zn(2+).

This sequence belongs to the peptidase M3 family. Monomer. The cofactor is Zn(2+).

The protein localises to the mitochondrion matrix. It carries out the reaction Release of an N-terminal octapeptide as second stage of processing of some proteins imported into the mitochondrion.. With respect to regulation, activity is divalent cation-dependent. It is stimulated by manganese, magnesium or calcium ions and reversibly inhibited by zinc, cobalt and iron. In terms of biological role, cleaves proteins, imported into the mitochondrion, to their mature size. This Pongo abelii (Sumatran orangutan) protein is Mitochondrial intermediate peptidase (MIPEP).